The primary structure comprises 107 residues: Potassium voltage-gated channel subfamily E member 3 (107 aa).

Residues N5, N22, and N45 are each glycosylated (N-linked (GlcNAc...) asparagine). A disordered region spans residues 31–54 (CRPGPGPGSGTGPDNQTEDHRASL). The chain crosses the membrane as a helical span at residues 61 to 81 (SYMYILFVMFLFAVTVGSLIL). Residues 72 to 83 (FAVTVGSLILGY) are interaction with KCNQ1. Over 82 to 103 (GYTRSRKVDKRSDPYHVYIKNR) the chain is Cytoplasmic.

Belongs to the potassium channel KCNE family. As to quaternary structure, interacts with KCNB1. Interacts with KCNC2. Associates with KCNC4/Kv3.4. Interacts with KCNQ1; associates with a KCNQ1:KCNE3 stoichiometry of 4:4; produces a current with nearly instantaneous activation with a linear current-voltage relationship and alters membrane raft localization; affects KCNQ1 structure and gating properties.

It is found in the cell membrane. The protein resides in the cytoplasm. Its subcellular location is the perikaryon. It localises to the cell projection. The protein localises to the dendrite. It is found in the membrane raft. Ancillary protein that functions as a regulatory subunit of the voltage-gated potassium (Kv) channel complex composed of pore-forming and potassium-conducting alpha subunits and of regulatory beta subunits. KCNE3 beta subunit modulates the gating kinetics and enhances stability of the channel complex. Alters the gating of the delayed rectifier Kv channel containing KCNB1 alpha subunit. Associates with KCNC4/Kv3.4 alpha subunit to form the subthreshold Kv channel in skeletal muscle and to establish the resting membrane potential (RMP) in muscle cells. Association with KCNQ1/KCLQT1 alpha subunit may form the intestinal cAMP-stimulated potassium channel involved in chloride secretion that produces a current with nearly instantaneous activation with a linear current-voltage relationship. In Rattus norvegicus (Rat), this protein is Potassium voltage-gated channel subfamily E member 3.